We begin with the raw amino-acid sequence, 112 residues long: Cell cycle protein GpsB (112 aa).

Residues 38 to 72 (IKDYEAFHKEFEQLKQQNARLKRELEEQKLVATQV) adopt a coiled-coil conformation.

The protein belongs to the GpsB family. Forms polymers through the coiled coil domains. Interacts with PBP1, MreC and EzrA.

The protein localises to the cytoplasm. In terms of biological role, divisome component that associates with the complex late in its assembly, after the Z-ring is formed, and is dependent on DivIC and PBP2B for its recruitment to the divisome. Together with EzrA, is a key component of the system that regulates PBP1 localization during cell cycle progression. Its main role could be the removal of PBP1 from the cell pole after pole maturation is completed. Also contributes to the recruitment of PBP1 to the division complex. Not essential for septum formation. The chain is Cell cycle protein GpsB from Bacillus cereus (strain ZK / E33L).